The primary structure comprises 194 residues: MKNIILASASERRQELLKRILEDFQIIVSDFDESSAPFKDNIPSYVMNLAEGKARSVSKKIMDQDSNLVIGCDTLVAFNNKVLGKPKDKKDAFEMLQALSGNEHEVYSGLAILDVKSNKIITDFVCTKVKFSKLTSLQIEKYINTGDSMDKAGAYGIQGKAGVFVENINGCYYNVVGLPLNKLNSMLMEMGVNL.

Asp73 (proton acceptor) is an active-site residue.

The protein belongs to the Maf family. YhdE subfamily. Requires a divalent metal cation as cofactor.

It is found in the cytoplasm. It catalyses the reaction dTTP + H2O = dTMP + diphosphate + H(+). The enzyme catalyses UTP + H2O = UMP + diphosphate + H(+). Functionally, nucleoside triphosphate pyrophosphatase that hydrolyzes dTTP and UTP. May have a dual role in cell division arrest and in preventing the incorporation of modified nucleotides into cellular nucleic acids. The chain is dTTP/UTP pyrophosphatase from Clostridium botulinum (strain ATCC 19397 / Type A).